The primary structure comprises 274 residues: Ribose-5-phosphate isomerase (274 aa).

The protein belongs to the ribose 5-phosphate isomerase family.

The protein resides in the cytoplasm. It carries out the reaction aldehydo-D-ribose 5-phosphate = D-ribulose 5-phosphate. The protein operates within carbohydrate degradation; pentose phosphate pathway; D-ribose 5-phosphate from D-ribulose 5-phosphate (non-oxidative stage): step 1/1. The polypeptide is Ribose-5-phosphate isomerase (RKI1) (Kluyveromyces lactis (strain ATCC 8585 / CBS 2359 / DSM 70799 / NBRC 1267 / NRRL Y-1140 / WM37) (Yeast)).